Consider the following 184-residue polypeptide: 2-C-methyl-D-erythritol 2,4-cyclodiphosphate synthase (184 aa).

Positions 17 and 19 each coordinate a divalent metal cation. 4-CDP-2-C-methyl-D-erythritol 2-phosphate is bound by residues 17 to 19 (DVH) and 47 to 48 (HS). His55 serves as a coordination point for a divalent metal cation. 4-CDP-2-C-methyl-D-erythritol 2-phosphate is bound by residues 74 to 78 (FPNTD), Phe152, and Arg155.

It belongs to the IspF family. Homotrimer. Requires a divalent metal cation as cofactor.

The catalysed reaction is 4-CDP-2-C-methyl-D-erythritol 2-phosphate = 2-C-methyl-D-erythritol 2,4-cyclic diphosphate + CMP. It participates in isoprenoid biosynthesis; isopentenyl diphosphate biosynthesis via DXP pathway; isopentenyl diphosphate from 1-deoxy-D-xylulose 5-phosphate: step 4/6. In terms of biological role, involved in the biosynthesis of isopentenyl diphosphate (IPP) and dimethylallyl diphosphate (DMAPP), two major building blocks of isoprenoid compounds. Catalyzes the conversion of 4-diphosphocytidyl-2-C-methyl-D-erythritol 2-phosphate (CDP-ME2P) to 2-C-methyl-D-erythritol 2,4-cyclodiphosphate (ME-CPP) with a corresponding release of cytidine 5-monophosphate (CMP). In Anaplasma marginale (strain St. Maries), this protein is 2-C-methyl-D-erythritol 2,4-cyclodiphosphate synthase.